Here is a 174-residue protein sequence, read N- to C-terminus: Micrococcal nuclease (174 aa).

The N-terminal stretch at 1–23 (MKSALAALRAVAAAVVLIVSVPA) is a signal peptide. Catalysis depends on residues Arg52, Glu60, and Arg94.

Belongs to the thermonuclease family.

The catalysed reaction is Endonucleolytic cleavage to nucleoside 3'-phosphates and 3'-phosphooligonucleotide end-products.. The chain is Micrococcal nuclease (nuc) from Shigella flexneri.